The sequence spans 417 residues: Ribonuclease T2-like (417 aa).

The signal sequence occupies residues 1–22 (MSSISGFLGAIPGAQQILQTMA). 5 disulfides stabilise this stretch: Cys-45-Cys-63, Cys-52-Cys-99, Cys-62-Cys-165, Cys-107-Cys-157, and Cys-229-Cys-264. Residue His-92 is part of the active site. An N-linked (GlcNAc...) asparagine glycan is attached at Asn-115. Residues Glu-150 and His-154 contribute to the active site. Positions 274 to 296 (KTPNKDPGHGHEPTKTRHPHGPT) are disordered. Positions 276-288 (PNKDPGHGHEPTK) are enriched in basic and acidic residues. Asn-383 carries N-linked (GlcNAc...) asparagine glycosylation.

The protein belongs to the RNase T2 family.

It is found in the vacuole lumen. The protein localises to the cytoplasm. The catalysed reaction is a ribonucleotidyl-ribonucleotide-RNA + H2O = a 3'-end 3'-phospho-ribonucleotide-RNA + a 5'-end dephospho-ribonucleoside-RNA + H(+). Its function is as follows. Rnase which modulates cell survival under stress conditions. Released from the vacuole to the cytoplasm during stress to promote tRNA and rRNA cleavage and to activate separately a downstream pathway that promotes cell death. Involved in cell size, vacuolar morphology and growth at high temperatures and high salt concentration. In Emericella nidulans (strain FGSC A4 / ATCC 38163 / CBS 112.46 / NRRL 194 / M139) (Aspergillus nidulans), this protein is Ribonuclease T2-like (rny1).